Here is a 185-residue protein sequence, read N- to C-terminus: Deoxyuridine 5'-triphosphate nucleotidohydrolase (185 aa).

The disordered stretch occupies residues 1–23 (MSHLQAHMQRNNKESHSLSPFSQ). Substrate is bound by residues 95 to 97 (RSG), Asn108, 112 to 114 (TID), and Lys122. A disordered region spans residues 160 to 185 (DQKDSSQTPSNEGSRGADGFGSTGHD). Positions 175 to 185 (GADGFGSTGHD) are enriched in gly residues.

The protein belongs to the dUTPase family. Mg(2+) serves as cofactor.

It catalyses the reaction dUTP + H2O = dUMP + diphosphate + H(+). The protein operates within pyrimidine metabolism; dUMP biosynthesis; dUMP from dCTP (dUTP route): step 2/2. In terms of biological role, this enzyme is involved in nucleotide metabolism: it produces dUMP, the immediate precursor of thymidine nucleotides and it decreases the intracellular concentration of dUTP so that uracil cannot be incorporated into DNA. This Bartonella quintana (strain Toulouse) (Rochalimaea quintana) protein is Deoxyuridine 5'-triphosphate nucleotidohydrolase.